Consider the following 66-residue polypeptide: COP-associated protein (66 aa).

The HMA domain maps to 1–66 (MKIDIPVKGM…AILDAGYELG (66 aa)). Positions 12 and 15 each coordinate Cu cation.

In terms of biological role, part of a cation-transporting system which is associated with copper export out of the H.pylori cells. The sequence is that of COP-associated protein (copP) from Helicobacter felis (strain ATCC 49179 / CCUG 28539 / NCTC 12436 / CS1).